The chain runs to 59 residues: EIFPFNVPEGKNDPAFLQNLQQEALNYINQQQVPNLEKHKAEELKVAAKERAAYNAGYY.

This chain is Cuticle protein 16 isoform D, found in Limulus polyphemus (Atlantic horseshoe crab).